The primary structure comprises 251 residues: Coproheme decarboxylase (251 aa).

Fe-coproporphyrin III is bound by residues Arg133, 147 to 151 (YPMSK), His174, Gln187, and Ser225. Residue Tyr147 is part of the active site.

This sequence belongs to the ChdC family. Type 1 subfamily. Requires Fe-coproporphyrin III as cofactor.

It catalyses the reaction Fe-coproporphyrin III + 2 H2O2 + 2 H(+) = heme b + 2 CO2 + 4 H2O. It carries out the reaction Fe-coproporphyrin III + H2O2 + H(+) = harderoheme III + CO2 + 2 H2O. The catalysed reaction is harderoheme III + H2O2 + H(+) = heme b + CO2 + 2 H2O. Its pathway is porphyrin-containing compound metabolism; protoheme biosynthesis. In terms of biological role, involved in coproporphyrin-dependent heme b biosynthesis. Catalyzes the decarboxylation of Fe-coproporphyrin III (coproheme) to heme b (protoheme IX), the last step of the pathway. The reaction occurs in a stepwise manner with a three-propionate intermediate. This chain is Coproheme decarboxylase, found in Listeria monocytogenes serotype 4a (strain HCC23).